The chain runs to 280 residues: 4-deoxy-L-threo-5-hexosulose-uronate ketol-isomerase (280 aa).

Positions 198, 200, 205, and 247 each coordinate Zn(2+).

It belongs to the KduI family. Zn(2+) is required as a cofactor.

It catalyses the reaction 5-dehydro-4-deoxy-D-glucuronate = 3-deoxy-D-glycero-2,5-hexodiulosonate. Its pathway is glycan metabolism; pectin degradation; 2-dehydro-3-deoxy-D-gluconate from pectin: step 4/5. In terms of biological role, catalyzes the isomerization of 5-dehydro-4-deoxy-D-glucuronate to 3-deoxy-D-glycero-2,5-hexodiulosonate. The sequence is that of 4-deoxy-L-threo-5-hexosulose-uronate ketol-isomerase from Bacteroides fragilis (strain ATCC 25285 / DSM 2151 / CCUG 4856 / JCM 11019 / LMG 10263 / NCTC 9343 / Onslow / VPI 2553 / EN-2).